The chain runs to 599 residues: Aspartate--tRNA(Asp/Asn) ligase (599 aa).

Position 173 (glutamate 173) interacts with L-aspartate. Positions 197-200 are aspartate; sequence QLYK. Arginine 219 contacts L-aspartate. ATP is bound by residues 219–221 and glutamine 228; that span reads RDE. Position 451 (histidine 451) interacts with L-aspartate. Position 484 (glutamate 484) interacts with ATP. Arginine 491 provides a ligand contact to L-aspartate. ATP is bound at residue 536-539; the sequence is GLDR.

Belongs to the class-II aminoacyl-tRNA synthetase family. Type 1 subfamily. In terms of assembly, homodimer.

The protein localises to the cytoplasm. It carries out the reaction tRNA(Asx) + L-aspartate + ATP = L-aspartyl-tRNA(Asx) + AMP + diphosphate. Its function is as follows. Aspartyl-tRNA synthetase with relaxed tRNA specificity since it is able to aspartylate not only its cognate tRNA(Asp) but also tRNA(Asn). Reaction proceeds in two steps: L-aspartate is first activated by ATP to form Asp-AMP and then transferred to the acceptor end of tRNA(Asp/Asn). This Methylococcus capsulatus (strain ATCC 33009 / NCIMB 11132 / Bath) protein is Aspartate--tRNA(Asp/Asn) ligase.